A 618-amino-acid chain; its full sequence is Proline--tRNA ligase (618 aa).

It belongs to the class-II aminoacyl-tRNA synthetase family. ProS type 1 subfamily. In terms of assembly, homodimer.

It is found in the cytoplasm. The catalysed reaction is tRNA(Pro) + L-proline + ATP = L-prolyl-tRNA(Pro) + AMP + diphosphate. Its function is as follows. Catalyzes the attachment of proline to tRNA(Pro) in a two-step reaction: proline is first activated by ATP to form Pro-AMP and then transferred to the acceptor end of tRNA(Pro). As ProRS can inadvertently accommodate and process non-cognate amino acids such as alanine and cysteine, to avoid such errors it has two additional distinct editing activities against alanine. One activity is designated as 'pretransfer' editing and involves the tRNA(Pro)-independent hydrolysis of activated Ala-AMP. The other activity is designated 'posttransfer' editing and involves deacylation of mischarged Ala-tRNA(Pro). The misacylated Cys-tRNA(Pro) is not edited by ProRS. The protein is Proline--tRNA ligase of Streptococcus pyogenes serotype M12 (strain MGAS2096).